Consider the following 390-residue polypeptide: L-serine phosphate decarboxylase Cj1436c (390 aa).

Lys-243 carries the post-translational modification N6-(pyridoxal phosphate)lysine.

Belongs to the class-I pyridoxal-phosphate-dependent aminotransferase family. Pyridoxal 5'-phosphate is required as a cofactor.

The enzyme catalyses O-phospho-L-serine + H(+) = phosphoethanolamine + CO2. Its pathway is capsule biogenesis; capsule polysaccharide biosynthesis. Functionally, pyridoxal phosphate (PLP)-dependent decarboxylase involved in the biosynthesis of amidated D-glucuronic acid structures found on the capsular polysaccharide (CPS) of C.jejuni. Catalyzes the decarboxylation of L-serine phosphate to ethanolamine phosphate. Less active with L-threonine phosphate. No activity with L-serine, L-threonine, L-aspartate or L-glutamate. This is L-serine phosphate decarboxylase Cj1436c from Campylobacter jejuni subsp. jejuni serotype O:2 (strain ATCC 700819 / NCTC 11168).